The following is a 392-amino-acid chain: ATP phosphoribosyltransferase regulatory subunit (392 aa).

It belongs to the class-II aminoacyl-tRNA synthetase family. HisZ subfamily. In terms of assembly, heteromultimer composed of HisG and HisZ subunits.

It is found in the cytoplasm. It participates in amino-acid biosynthesis; L-histidine biosynthesis; L-histidine from 5-phospho-alpha-D-ribose 1-diphosphate: step 1/9. Functionally, required for the first step of histidine biosynthesis. May allow the feedback regulation of ATP phosphoribosyltransferase activity by histidine. The protein is ATP phosphoribosyltransferase regulatory subunit of Listeria monocytogenes serotype 4b (strain F2365).